A 511-amino-acid chain; its full sequence is Cobyric acid synthase (511 aa).

Positions 251–443 constitute a GATase cobBQ-type domain; sequence LLDIAIICLP…IHGIFDNDIF (193 aa). Catalysis depends on Cys-332, which acts as the Nucleophile. His-435 is a catalytic residue.

Belongs to the CobB/CobQ family. CobQ subfamily.

It participates in cofactor biosynthesis; adenosylcobalamin biosynthesis. In terms of biological role, catalyzes amidations at positions B, D, E, and G on adenosylcobyrinic A,C-diamide. NH(2) groups are provided by glutamine, and one molecule of ATP is hydrogenolyzed for each amidation. The polypeptide is Cobyric acid synthase (Listeria innocua serovar 6a (strain ATCC BAA-680 / CLIP 11262)).